The sequence spans 558 residues: MAHIPEVLPKSIPIPAFIVTTSSYLWYYFNLVLTQIPGGQFIVSYIKKSHHDDPYRTTVEIGLILYGIIYYLSKPQQKKSLQAQKPNLSPQEIDALIEDWEPEPLVDPSATDEQSWRVAKTPVTMEMPIQNHITITRNNLQEKYTNVFNLASNNFLQLSATEPVKEVVKTTIKNYGVGACGPAGFYGNQDVHYTLEYDLAQFFGTQGSVLYGQDFCAAPSVLPAFTKRGDVIVADDQVSLPVQNALQLSRSTVYYFNHNDMNSLECLLNELTEQEKLEKLPAIPRKFIVTEGIFHNSGDLAPLPELTKLKNKYKFRLFVDETFSIGVLGATGRGLSEHFNMDRATAIDITVGSMATALGSTGGFVLGDSVMCLHQRIGSNAYCFSACLPAYTVTSVSKVLKLMDSNNDAVQTLQKLSKSLHDSFASDDSLRSYVIVTSSPVSAVLHLQLTPAYRSRKFGYTCEQLFETMSALQKKSQTNKFIEPYEEEEKFLQSIVDHALINYNVLITRNTIVLKQETLPIVPSLKICCNAAMSPEELKNACESVKQSILACCQESNK.

Topologically, residues 1–49 (MAHIPEVLPKSIPIPAFIVTTSSYLWYYFNLVLTQIPGGQFIVSYIKKS) are lumenal. A helical membrane pass occupies residues 50–84 (HHDDPYRTTVEIGLILYGIIYYLSKPQQKKSLQAQ). Topologically, residues 85-341 (KPNLSPQEID…GRGLSEHFNM (257 aa)) are cytoplasmic. Position 121 is a phosphothreonine (T121). Residues 342–371 (DRATAIDITVGSMATALGSTGGFVLGDSVM) form a helical membrane-spanning segment. Topologically, residues 372–424 (CLHQRIGSNAYCFSACLPAYTVTSVSKVLKLMDSNNDAVQTLQKLSKSLHDSF) are lumenal. The helical transmembrane segment at 425 to 457 (ASDDSLRSYVIVTSSPVSAVLHLQLTPAYRSRK) threads the bilayer. Over 458–558 (FGYTCEQLFE…ILACCQESNK (101 aa)) the chain is Cytoplasmic.

The protein belongs to the class-II pyridoxal-phosphate-dependent aminotransferase family. As to quaternary structure, LCB1 and LCB2 encode essential subunits of the enzyme and form a heterodimer. Component of the SPOTS complex, at least composed of LCB1/2 (LCB1 and/or LCB2), ORM1/2 (ORM1 and/or ORM2), SAC1 and TSC3. Interacts with LCB2 and TSC3. Pyridoxal 5'-phosphate is required as a cofactor.

It is found in the cytoplasm. The protein resides in the endoplasmic reticulum membrane. The enzyme catalyses L-serine + hexadecanoyl-CoA + H(+) = 3-oxosphinganine + CO2 + CoA. Its pathway is lipid metabolism; sphingolipid metabolism. Functionally, component of serine palmitoyltransferase (SPT), which catalyzes the committed step in the synthesis of sphingolipids, the condensation of serine with palmitoyl CoA to form the long chain base 3-ketosphinganine. The sequence is that of Serine palmitoyltransferase 1 (LCB1) from Saccharomyces cerevisiae (strain ATCC 204508 / S288c) (Baker's yeast).